We begin with the raw amino-acid sequence, 90 residues long: DNA-binding protein HU-alpha (90 aa).

Belongs to the bacterial histone-like protein family. As to quaternary structure, heterodimer of an alpha and a beta chain.

In terms of biological role, histone-like DNA-binding protein which is capable of wrapping DNA to stabilize it, and thus to prevent its denaturation under extreme environmental conditions. This chain is DNA-binding protein HU-alpha (hupA), found in Escherichia coli O157:H7.